A 515-amino-acid chain; its full sequence is Cytidine and dCMP deaminase domain-containing protein 1 (515 aa).

2 stretches are compositionally biased toward polar residues: residues 1–11 and 18–27; these read MKEAGQMQNLE and SVSTQTGSMT. Disordered regions lie at residues 1–27 and 56–83; these read MKEAGQMQNLESARAGRSVSTQTGSMT and RQKSQKNEEGKHGPLGDNEEMTRVSTDK. Basic and acidic residues predominate over residues 60-83; it reads QKNEEGKHGPLGDNEEMTRVSTDK. The CMP/dCMP-type deaminase 1 domain maps to 71-169; the sequence is GDNEEMTRVS…SLLTEASSSE (99 aa). His-110, Cys-135, and Cys-138 together coordinate Zn(2+). A Nuclear export signal motif is present at residues 272-284; sequence NLRQNMKDLILLL. Residues 318–483 form the CMP/dCMP-type deaminase 2 domain; it reads EIARHCMVQA…LNPSGAYGLE (166 aa). His-399 provides a ligand contact to Zn(2+). The active-site Proton donor is the Glu-401. Residues Cys-427 and Cys-430 each coordinate Zn(2+). The Bipartite nuclear localization signal signature appears at 489-511; that stretch reads RRENGVLRPVPQKEEQHQDKKLC. The tract at residues 494–515 is disordered; that stretch reads VLRPVPQKEEQHQDKKLCLGIH.

Belongs to the cytidine and deoxycytidylate deaminase family. Zn(2+) is required as a cofactor.

The protein resides in the cytoplasm. Its subcellular location is the nucleus. The catalysed reaction is 2'-deoxycytidine + H2O + H(+) = 2'-deoxyuridine + NH4(+). The enzyme catalyses cytidine + H2O + H(+) = uridine + NH4(+). Functionally, catalyzes the deamination of cytidine and deoxycytidine into uridine and deoxyuridine, respectively. May play an important role in testicular development and spermatogenesis. In Pongo abelii (Sumatran orangutan), this protein is Cytidine and dCMP deaminase domain-containing protein 1 (CDADC1).